Reading from the N-terminus, the 280-residue chain is Foldase protein PrsA 4 (280 aa).

An N-terminal signal peptide occupies residues 1–21 (MKRKKLVIGSILMGMTLSLSA). A lipid anchor (N-palmitoyl cysteine) is attached at Cys22. Cys22 carries S-diacylglycerol cysteine lipidation. One can recognise a PpiC domain in the interval 132-222 (KPKLQVSHIL…FGYHIIKLTD (91 aa)).

This sequence belongs to the PrsA family.

The protein resides in the cell membrane. The catalysed reaction is [protein]-peptidylproline (omega=180) = [protein]-peptidylproline (omega=0). Plays a major role in protein secretion by helping the post-translocational extracellular folding of several secreted proteins. The sequence is that of Foldase protein PrsA 4 (prsA4) from Bacillus cereus (strain ATCC 14579 / DSM 31 / CCUG 7414 / JCM 2152 / NBRC 15305 / NCIMB 9373 / NCTC 2599 / NRRL B-3711).